Reading from the N-terminus, the 115-residue chain is U3-lycotoxin-Ls1a (115 aa).

The signal sequence occupies residues 1–20 (MKFVLLFGVLLVTLFSYSSA). Residues 21–44 (EMLDDFDQADEDELLSLIEKEEAR) constitute a propeptide that is removed on maturation. Cystine bridges form between Cys48-Cys63, Cys55-Cys72, Cys62-Cys87, and Cys74-Cys85.

Belongs to the neurotoxin 19 (CSTX) family. 01 subfamily. As to expression, expressed by the venom gland.

It localises to the secreted. In Lycosa singoriensis (Wolf spider), this protein is U3-lycotoxin-Ls1a.